We begin with the raw amino-acid sequence, 616 residues long: Glycogenin-1 (616 aa).

UDP is bound by residues Leu10, Tyr16, and Arg95. UDP-alpha-D-glucose-binding residues include Leu10, Tyr16, Arg95, Lys104, Asp120, Asp122, Asn158, Ser159, Asp185, Asp188, and Gln189. Residues Asp120 and Asp122 each coordinate UDP. Positions 120 and 122 each coordinate Mn(2+). Residue Tyr230 is glycosylated (O-linked (Glc...) tyrosine). His247, Gly250, and Lys253 together coordinate UDP. Position 247 (His247) interacts with Mn(2+). Residues Gly250 and Lys253 each coordinate UDP-alpha-D-glucose. Positions 283–302 (HQLNNEVSKPKISDSDKTET) are enriched in basic and acidic residues. 3 disordered regions span residues 283-320 (HQLNNEVSKPKISDSDKTETPETITPVDAPPSNEPTTN), 335-354 (NQNAEPVPNSDHSPAPNPVP), and 371-516 (TNQP…SVDD). The span at 377-386 (ESREYSKEND) shows a compositional bias: basic and acidic residues. The segment covering 400 to 419 (SPPNSTQEPNSSYSVVSTQA) has biased composition (polar residues). Over residues 450–461 (STAASSNNNVSN) the composition is skewed to low complexity. Composition is skewed to polar residues over residues 462–485 (QPDNKNFSNSKENNISVEPSPSNP) and 492–503 (DNIQKPSVSTND). O-linked (Glc...) tyrosine glycosylation occurs at Tyr598.

This sequence belongs to the glycosyltransferase 8 family. Glycogenin subfamily. It depends on Mn(2+) as a cofactor.

It is found in the cytoplasm. It localises to the vacuole. The catalysed reaction is L-tyrosyl-[glycogenin] + UDP-alpha-D-glucose = alpha-D-glucosyl-L-tyrosyl-[glycogenin] + UDP + H(+). The enzyme catalyses [1,4-alpha-D-glucosyl](n)-L-tyrosyl-[glycogenin] + UDP-alpha-D-glucose = [1,4-alpha-D-glucosyl](n+1)-L-tyrosyl-[glycogenin] + UDP + H(+). Self-glucosylating initiator of glycogen synthesis. It catalyzes the formation of a short alpha (1,4)-glucosyl chain covalently attached via a glucose 1-O-tyrosyl linkage to internal tyrosine residues and these chains act as primers for the elongation reaction catalyzed by glycogen synthase. Capable of transferring glucosyl residues to unbound acceptors such as free oligoglucans or oligoglucan derivatives. The chain is Glycogenin-1 (GLG1) from Saccharomyces cerevisiae (strain YJM789) (Baker's yeast).